Reading from the N-terminus, the 943-residue chain is UvrABC system protein A (943 aa).

An ATP-binding site is contributed by 31–38; the sequence is GLSGSGKS. A C4-type zinc finger spans residues 253 to 280; the sequence is CPHCGYSVPELEPRLFSFNNPAGACPTC. ABC transporter domains follow at residues 310–587 and 607–937; these read WDRR…PNSI and LDKK…RFLK. 640-647 is a binding site for ATP; it reads GVSGSGKS. Residues 740–766 form a C4-type zinc finger; it reads CEACQGDGVLKVEMHFLPDVYVPCDQC.

This sequence belongs to the ABC transporter superfamily. UvrA family. In terms of assembly, forms a heterotetramer with UvrB during the search for lesions.

The protein resides in the cytoplasm. Its function is as follows. The UvrABC repair system catalyzes the recognition and processing of DNA lesions. UvrA is an ATPase and a DNA-binding protein. A damage recognition complex composed of 2 UvrA and 2 UvrB subunits scans DNA for abnormalities. When the presence of a lesion has been verified by UvrB, the UvrA molecules dissociate. This Haemophilus influenzae (strain ATCC 51907 / DSM 11121 / KW20 / Rd) protein is UvrABC system protein A.